The sequence spans 136 residues: Histone H3, embryonic (136 aa).

The segment at 1–43 (MARTKQTARKSTGGKAPRKQLATKAARKSAPATGGVKKPHRYR) is disordered. At lysine 5 the chain carries N6-methylated lysine. At lysine 10 the chain carries N6-acetyllysine; alternate. Lysine 10 carries the N6-methylated lysine; alternate modification. Residue serine 11 is modified to Phosphoserine. Lysine 15 and lysine 24 each carry N6-acetyllysine. 3 positions are modified to N6-methylated lysine: lysine 28, lysine 37, and lysine 80.

Belongs to the histone H3 family. The nucleosome is a histone octamer containing two molecules each of H2A, H2B, H3 and H4 assembled in one H3-H4 heterotetramer and two H2A-H2B heterodimers. The octamer wraps approximately 147 bp of DNA. Acetylation is generally linked to gene activation. Post-translationally, methylation at Lys-5 is linked to gene activation. Methylation at Lys-10 is linked to gene repression.

The protein localises to the nucleus. Its subcellular location is the chromosome. In terms of biological role, core component of nucleosome. Nucleosomes wrap and compact DNA into chromatin, limiting DNA accessibility to the cellular machineries which require DNA as a template. Histones thereby play a central role in transcription regulation, DNA repair, DNA replication and chromosomal stability. DNA accessibility is regulated via a complex set of post-translational modifications of histones, also called histone code, and nucleosome remodeling. In Paracentrotus lividus (Common sea urchin), this protein is Histone H3, embryonic.